Reading from the N-terminus, the 439-residue chain is Putative FBD-associated F-box protein At1g05080 (439 aa).

The F-box domain occupies 12-58; that stretch reads EDRISVLPEDLLVVILDLLPTKDVVATMILSKRWLSIWTMVRTLEYT. Positions 360–410 constitute an FBD domain; the sequence is SWKQPSHVPECLSSQLEIFEWRDYGDRIIEEEFLTYVLANSKRLKTATISL.

The polypeptide is Putative FBD-associated F-box protein At1g05080 (Arabidopsis thaliana (Mouse-ear cress)).